The following is a 146-amino-acid chain: Transcriptional regulator MraZ (146 aa).

SpoVT-AbrB domains are found at residues 5–47 (EYYH…TITD) and 76–119 (SIQV…AKEK).

This sequence belongs to the MraZ family. Forms oligomers.

Its subcellular location is the cytoplasm. It is found in the nucleoid. This Dictyoglomus thermophilum (strain ATCC 35947 / DSM 3960 / H-6-12) protein is Transcriptional regulator MraZ.